The sequence spans 212 residues: Kynurenine formamidase (212 aa).

Residue Trp17 coordinates substrate. Positions 48, 52, and 54 each coordinate Zn(2+). The active-site Proton donor/acceptor is the His58. Positions 161 and 173 each coordinate Zn(2+).

The protein belongs to the Cyclase 1 superfamily. KynB family. Homodimer. The cofactor is Zn(2+).

The catalysed reaction is N-formyl-L-kynurenine + H2O = L-kynurenine + formate + H(+). It functions in the pathway amino-acid degradation; L-tryptophan degradation via kynurenine pathway; L-kynurenine from L-tryptophan: step 2/2. Functionally, catalyzes the hydrolysis of N-formyl-L-kynurenine to L-kynurenine, the second step in the kynurenine pathway of tryptophan degradation. This is Kynurenine formamidase from Salinibacter ruber (strain DSM 13855 / M31).